Reading from the N-terminus, the 308-residue chain is Methionyl-tRNA formyltransferase (308 aa).

109 to 112 (SLLP) contributes to the (6S)-5,6,7,8-tetrahydrofolate binding site.

It belongs to the Fmt family.

The catalysed reaction is L-methionyl-tRNA(fMet) + (6R)-10-formyltetrahydrofolate = N-formyl-L-methionyl-tRNA(fMet) + (6S)-5,6,7,8-tetrahydrofolate + H(+). Its function is as follows. Attaches a formyl group to the free amino group of methionyl-tRNA(fMet). The formyl group appears to play a dual role in the initiator identity of N-formylmethionyl-tRNA by promoting its recognition by IF2 and preventing the misappropriation of this tRNA by the elongation apparatus. This Methylococcus capsulatus (strain ATCC 33009 / NCIMB 11132 / Bath) protein is Methionyl-tRNA formyltransferase.